A 505-amino-acid polypeptide reads, in one-letter code: Actin nucleation-promoting factor WASL (505 aa).

The residue at position 2 (Ser-2) is an N-acetylserine. One can recognise a WH1 domain in the interval 34–141 (LGKKCVTMSS…KAVTDLLGRR (108 aa)). Disordered stretches follow at residues 138–163 (LGRR…ATVD) and 185–205 (TKEK…DIGT). Residues 186–198 (KEKKKGKAKKKRL) show a composition bias toward basic residues. One can recognise a CRIB domain in the interval 203–216 (IGTPSNFQHIGHVG). At Ser-242 the chain carries Phosphoserine; by TNK2. Phosphotyrosine; by FAK1 and TNK2 is present on Tyr-256. Disordered stretches follow at residues 266 to 406 (EAVK…AGSK), 449 to 468 (SVTD…SGIV), and 477 to 505 (KRSK…EWED). Pro residues-rich tracts occupy residues 276 to 349 (APPP…PLPA), 356 to 365 (SGPPPPPPPL), and 372 to 391 (APPP…PPGL). Residue Arg-307 is modified to Omega-N-methylarginine. WH2 domains are found at residues 405-422 (SKAA…LKKV) and 433-450 (GRDA…LKSV). Ser-484 and Ser-485 each carry phosphoserine. The segment covering 486–505 (DEDEDEDDDEDFEDDDEWED) has biased composition (acidic residues).

As to quaternary structure, binds actin and the Arp2/3 complex. Interacts with CDC42. Interacts with FCHSD1. Interacts with FCHSD2. Binds to SH3 domains of GRB2. Interacts with the C-terminal SH3 domain of DNMBP. Interacts with SNX9. Interacts with the WW domains of PRPF40A/FBP11. Interacts with PTK2/FAK1. Interacts with PACSIN1, PACSIN2 and PACSIN3. Interacts with NOSTRIN. Binds to TNK2. Interacts with SNX33. Interacts with NONO (via second RRM domain); the interaction is direct. Component of a multiprotein complex with NONO and SFPQ; associates with the complex via direct interaction with NONO. Phosphorylation at Ser-242, Tyr-256, Ser-484 and Ser-485 enhances actin polymerization activity.

It is found in the cytoplasm. Its subcellular location is the cytoskeleton. The protein localises to the nucleus. Functionally, regulates actin polymerization by stimulating the actin-nucleating activity of the Arp2/3 complex. Involved in various processes, such as mitosis and cytokinesis, via its role in the regulation of actin polymerization. Together with CDC42, involved in the extension and maintenance of the formation of thin, actin-rich surface projections called filopodia. In addition to its role in the cytoplasm, also plays a role in the nucleus by regulating gene transcription, probably by promoting nuclear actin polymerization. Binds to HSF1/HSTF1 and forms a complex on heat shock promoter elements (HSE) that negatively regulates HSP90 expression. Plays a role in dendrite spine morphogenesis. This chain is Actin nucleation-promoting factor WASL (WASL), found in Bos taurus (Bovine).